The chain runs to 184 residues: Orotate phosphoribosyltransferase (184 aa).

5-phospho-alpha-D-ribose 1-diphosphate contacts are provided by residues Arg-99, Lys-100, Lys-103, His-105, and 125 to 133; that span reads EDTTTTGNS. Orotate contacts are provided by Thr-129 and Arg-157.

Belongs to the purine/pyrimidine phosphoribosyltransferase family. PyrE subfamily. As to quaternary structure, homodimer. The cofactor is Mg(2+).

The enzyme catalyses orotidine 5'-phosphate + diphosphate = orotate + 5-phospho-alpha-D-ribose 1-diphosphate. The protein operates within pyrimidine metabolism; UMP biosynthesis via de novo pathway; UMP from orotate: step 1/2. Its function is as follows. Catalyzes the transfer of a ribosyl phosphate group from 5-phosphoribose 1-diphosphate to orotate, leading to the formation of orotidine monophosphate (OMP). This chain is Orotate phosphoribosyltransferase, found in Corynebacterium glutamicum (strain ATCC 13032 / DSM 20300 / JCM 1318 / BCRC 11384 / CCUG 27702 / LMG 3730 / NBRC 12168 / NCIMB 10025 / NRRL B-2784 / 534).